The sequence spans 343 residues: Selenide, water dikinase (343 aa).

Residue U16 is part of the active site. Residue U16 is a non-standard amino acid, selenocysteine. Residues K19 and 46 to 48 contribute to the ATP site; that span reads GAE. D49 is a Mg(2+) binding site. Residues D66, D89, and 137-139 contribute to the ATP site; that span reads GHT. D89 is a binding site for Mg(2+). Residue D225 participates in Mg(2+) binding.

Belongs to the selenophosphate synthase 1 family. Class I subfamily. Homodimer. Requires Mg(2+) as cofactor.

It catalyses the reaction hydrogenselenide + ATP + H2O = selenophosphate + AMP + phosphate + 2 H(+). In terms of biological role, synthesizes selenophosphate from selenide and ATP. The chain is Selenide, water dikinase from Citrifermentans bemidjiense (strain ATCC BAA-1014 / DSM 16622 / JCM 12645 / Bem) (Geobacter bemidjiensis).